The sequence spans 676 residues: Basic proline-rich protein (676 aa).

Positions Met-1–Ala-16 are cleaved as a signal peptide. Phosphoserine is present on residues Ser-28 and Ser-30. The interval Asn-29–Gln-676 is disordered. Pro residues-rich tracts occupy residues Arg-36–Glu-50, Gly-71–Asp-424, and Pro-442–Gln-676. Positions Ala-409 to Pro-457 are excised as a propeptide.

As to expression, acinar cells and secretory granules of the parotid gland.

The protein resides in the secreted. Functionally, the parotid hormone stimulates dentinal fluid transport in teeth. The polypeptide is Basic proline-rich protein (Sus scrofa (Pig)).